The primary structure comprises 179 residues: MARLENHYKEKVVPELMARFGYKSVMEVPRLVKITLNMGVGEAVADKKILQNAVENMQAIGGQKPIVTHARKSIAGFKIREGMPVGCKVTLRRARMYEFLDRLISVAIPRIRDFRGLNPKAFDGRGNYSMGVREQIIFPEIDYDKIDAIRGMDITITSTAKTDAEAKALLEAFKFPFRT.

It belongs to the universal ribosomal protein uL5 family. In terms of assembly, part of the 50S ribosomal subunit; part of the 5S rRNA/L5/L18/L25 subcomplex. Contacts the 5S rRNA and the P site tRNA. Forms a bridge to the 30S subunit in the 70S ribosome.

Functionally, this is one of the proteins that bind and probably mediate the attachment of the 5S RNA into the large ribosomal subunit, where it forms part of the central protuberance. In the 70S ribosome it contacts protein S13 of the 30S subunit (bridge B1b), connecting the 2 subunits; this bridge is implicated in subunit movement. Contacts the P site tRNA; the 5S rRNA and some of its associated proteins might help stabilize positioning of ribosome-bound tRNAs. The sequence is that of Large ribosomal subunit protein uL5 from Methylococcus capsulatus (strain ATCC 33009 / NCIMB 11132 / Bath).